A 78-amino-acid polypeptide reads, in one-letter code: Probable [Fe-S]-dependent transcriptional repressor (78 aa).

Positions 56, 61, 64, and 70 each coordinate iron-sulfur cluster.

It belongs to the FeoC family.

Functionally, may function as a transcriptional regulator that controls feoABC expression. The sequence is that of Probable [Fe-S]-dependent transcriptional repressor from Escherichia coli O9:H4 (strain HS).